Consider the following 153-residue polypeptide: D-aminoacyl-tRNA deacylase (153 aa).

Residues 137-138 (GP) carry the Gly-cisPro motif, important for rejection of L-amino acids motif.

This sequence belongs to the DTD family. In terms of assembly, homodimer.

It is found in the cytoplasm. It carries out the reaction glycyl-tRNA(Ala) + H2O = tRNA(Ala) + glycine + H(+). The enzyme catalyses a D-aminoacyl-tRNA + H2O = a tRNA + a D-alpha-amino acid + H(+). An aminoacyl-tRNA editing enzyme that deacylates mischarged D-aminoacyl-tRNAs. Also deacylates mischarged glycyl-tRNA(Ala), protecting cells against glycine mischarging by AlaRS. Acts via tRNA-based rather than protein-based catalysis; rejects L-amino acids rather than detecting D-amino acids in the active site. By recycling D-aminoacyl-tRNA to D-amino acids and free tRNA molecules, this enzyme counteracts the toxicity associated with the formation of D-aminoacyl-tRNA entities in vivo and helps enforce protein L-homochirality. This Dehalococcoides mccartyi (strain ATCC BAA-2266 / KCTC 15142 / 195) (Dehalococcoides ethenogenes (strain 195)) protein is D-aminoacyl-tRNA deacylase.